We begin with the raw amino-acid sequence, 297 residues long: Lipoyl synthase (297 aa).

[4Fe-4S] cluster contacts are provided by Cys40, Cys45, Cys51, Cys67, Cys71, Cys74, and Ser280. The region spanning 53–269 (AVRKTATFMI…KEIALSKGFS (217 aa)) is the Radical SAM core domain.

The protein belongs to the radical SAM superfamily. Lipoyl synthase family. It depends on [4Fe-4S] cluster as a cofactor.

It localises to the cytoplasm. The catalysed reaction is [[Fe-S] cluster scaffold protein carrying a second [4Fe-4S](2+) cluster] + N(6)-octanoyl-L-lysyl-[protein] + 2 oxidized [2Fe-2S]-[ferredoxin] + 2 S-adenosyl-L-methionine + 4 H(+) = [[Fe-S] cluster scaffold protein] + N(6)-[(R)-dihydrolipoyl]-L-lysyl-[protein] + 4 Fe(3+) + 2 hydrogen sulfide + 2 5'-deoxyadenosine + 2 L-methionine + 2 reduced [2Fe-2S]-[ferredoxin]. Its pathway is protein modification; protein lipoylation via endogenous pathway; protein N(6)-(lipoyl)lysine from octanoyl-[acyl-carrier-protein]. Catalyzes the radical-mediated insertion of two sulfur atoms into the C-6 and C-8 positions of the octanoyl moiety bound to the lipoyl domains of lipoate-dependent enzymes, thereby converting the octanoylated domains into lipoylated derivatives. In Bacillus cereus (strain ATCC 14579 / DSM 31 / CCUG 7414 / JCM 2152 / NBRC 15305 / NCIMB 9373 / NCTC 2599 / NRRL B-3711), this protein is Lipoyl synthase.